Here is a 106-residue protein sequence, read N- to C-terminus: Large ribosomal subunit protein P1A (106 aa).

Ser2 is modified (N-acetylserine). A disordered region spans residues Gly73 to Asp106. Residues Gly81 to Met100 are compositionally biased toward acidic residues. Position 96 is a phosphoserine (Ser96).

The protein belongs to the eukaryotic ribosomal protein P1/P2 family. In terms of assembly, component of the large ribosomal subunit (LSU). Mature yeast ribosomes consist of a small (40S) and a large (60S) subunit. The 40S small subunit contains 1 molecule of ribosomal RNA (18S rRNA) and 33 different proteins (encoded by 57 genes). The large 60S subunit contains 3 rRNA molecules (25S, 5.8S and 5S rRNA) and 46 different proteins (encoded by 81 genes). The 5 acidic ribosomal P-proteins form the stalk structure of the 60S subunit. They are organized as a pentameric complex in which uL10/P0 interacts with 2 heterodimers, P1A-P2B and P1B-P2A. Post-translationally, N-terminally acetylated by acetyltransferase NatA.

It localises to the cytoplasm. Functionally, component of the ribosome, a large ribonucleoprotein complex responsible for the synthesis of proteins in the cell. The small ribosomal subunit (SSU) binds messenger RNAs (mRNAs) and translates the encoded message by selecting cognate aminoacyl-transfer RNA (tRNA) molecules. The large subunit (LSU) contains the ribosomal catalytic site termed the peptidyl transferase center (PTC), which catalyzes the formation of peptide bonds, thereby polymerizing the amino acids delivered by tRNAs into a polypeptide chain. The nascent polypeptides leave the ribosome through a tunnel in the LSU and interact with protein factors that function in enzymatic processing, targeting, and the membrane insertion of nascent chains at the exit of the ribosomal tunnel. This chain is Large ribosomal subunit protein P1A, found in Saccharomyces cerevisiae (strain ATCC 204508 / S288c) (Baker's yeast).